Consider the following 143-residue polypeptide: MTRVLATGTFDLLHPGHVFFLRQARSFGDELYVLVARDSMIKHKAQPIVPEGQRLKMISAFGVVDKALLGSESDIFEPLKEINPDIIVLGHDQFFDTGELEKNLGERGFKAKVVRIDDAMKCELCSSGRIIKRVLERYGQNEE.

ATP-binding positions include 9 to 10 (TF), 14 to 17 (HPGH), and D92.

It belongs to the archaeal FAD synthase family. As to quaternary structure, homodimer. It depends on a divalent metal cation as a cofactor.

The enzyme catalyses FMN + ATP + H(+) = FAD + diphosphate. Its pathway is cofactor biosynthesis; FAD biosynthesis; FAD from FMN: step 1/1. In terms of biological role, catalyzes the transfer of the AMP portion of ATP to flavin mononucleotide (FMN) to produce flavin adenine dinucleotide (FAD) coenzyme. This Methanococcoides burtonii (strain DSM 6242 / NBRC 107633 / OCM 468 / ACE-M) protein is FAD synthase.